A 396-amino-acid polypeptide reads, in one-letter code: MAKEKFTRTKPHVNVGTIGHIDHGKTTLTAALVKVQSKRNLAKAISYADIAKGGTVRDETKTVTIAAAHVEYESANRHYAHVDCPGHADYIKNMITGAAQMDGAILVVSSLDSVMPQTREHVLLARQVGLNHIVVFLNKCDAVDDPEMLDLVEMEVRELLSKYKFDGDNAPVVRGASLPALQGDPKWEETIQQLLSALDSYIPEPVRDIDKPFLMAIEDVFSIKGRGTVATGRIERGVIKVGDEVQIIGFKDTKKSVVTGVEMFRKLLDQGQAGDNVGCLLRGVEKEEIERGQVLAKPGSITPHTKFTGEVYVLKKEEGGRHTPFFTNYRPQFYIRTTDVTGTVNLPEGVKMVMPGDNITMTIELIAPVALEEQMRFAIREGGKTVGAGVVTKILA.

The tr-type G domain maps to 10–206 (KPHVNVGTIG…ALDSYIPEPV (197 aa)). Residues 19–26 (GHIDHGKT) are G1. Residue 19–26 (GHIDHGKT) coordinates GTP. Thr-26 contributes to the Mg(2+) binding site. The G2 stretch occupies residues 60 to 64 (TKTVT). Residues 83–86 (DCPG) are G3. Residues 83–87 (DCPGH) and 138–141 (NKCD) contribute to the GTP site. Residues 138-141 (NKCD) form a G4 region. The tract at residues 176–178 (ASL) is G5.

The protein belongs to the TRAFAC class translation factor GTPase superfamily. Classic translation factor GTPase family. EF-Tu/EF-1A subfamily. As to quaternary structure, monomer.

Its subcellular location is the cytoplasm. The enzyme catalyses GTP + H2O = GDP + phosphate + H(+). Its function is as follows. GTP hydrolase that promotes the GTP-dependent binding of aminoacyl-tRNA to the A-site of ribosomes during protein biosynthesis. This Sorangium cellulosum (strain So ce56) (Polyangium cellulosum (strain So ce56)) protein is Elongation factor Tu.